The primary structure comprises 110 residues: uncharacterized protein (110 aa).

This sequence to M.jannaschii MJ0123 and MJ1213.

This is an uncharacterized protein from Aquifex aeolicus (strain VF5).